Here is a 164-residue protein sequence, read N- to C-terminus: Endoribonuclease YbeY (164 aa).

Residues His111, His115, and His121 each coordinate Zn(2+). A disordered region spans residues Gly142–Glu164. A compositionally biased stretch (polar residues) spans Thr154–Glu164.

The protein belongs to the endoribonuclease YbeY family. Zn(2+) is required as a cofactor.

It localises to the cytoplasm. Single strand-specific metallo-endoribonuclease involved in late-stage 70S ribosome quality control and in maturation of the 3' terminus of the 16S rRNA. The chain is Endoribonuclease YbeY from Pseudomonas fluorescens (strain Pf0-1).